We begin with the raw amino-acid sequence, 97 residues long: Small, acid-soluble spore protein gamma-type (97 aa).

Residues 1–42 are compositionally biased toward polar residues; the sequence is MAKQTNKTASGTSTQHVKQQNAQASKNNFGTEFGSETNVQEV. The segment at 1–97 is disordered; that stretch reads MAKQTNKTAS…KNQNSGKYQG (97 aa). 2 repeats span residues 23 to 56 and 58 to 91; these read QASK…KSQN and QASK…KNQN. Positions 43-63 are enriched in low complexity; sequence KQQNAQAAANKSQNAQASKNN. Polar residues predominate over residues 69-78; sequence ASETSAQEVR. The span at 79 to 91 shows a compositional bias: low complexity; sequence QQNAQAQAKKNQN.

The protein belongs to the gamma-type SASP family.

Its function is as follows. SASP are proteins degraded in the first minutes of spore germination and provide amino acids for both new protein synthesis and metabolism. These proteins may be involved in dormant spore's high resistance to UV light. This chain is Small, acid-soluble spore protein gamma-type (sasP-B), found in Priestia megaterium (Bacillus megaterium).